A 696-amino-acid chain; its full sequence is uncharacterized protein (696 aa).

One can recognise a GGDEF domain in the interval 293 to 426 (SVLGLVLLGF…GSRQYCFYEE (134 aa)). The EAL domain maps to 435–689 (RIQLEHALHQ…EITAFLAEGN (255 aa)).

This is an uncharacterized protein from Synechocystis sp. (strain ATCC 27184 / PCC 6803 / Kazusa).